We begin with the raw amino-acid sequence, 283 residues long: Aldo-keto reductase Mmcs_1938 (283 aa).

The active-site Proton donor is the Tyr-58. Residues Gly-196, Leu-198, Val-200, Ile-236, Arg-238, Ser-239, Ala-240, Arg-244, Ser-247, Asn-248, and Arg-274 each coordinate NADPH.

Belongs to the aldo/keto reductase family.

This Mycobacterium sp. (strain MCS) protein is Aldo-keto reductase Mmcs_1938.